A 255-amino-acid polypeptide reads, in one-letter code: Acetylglutamate kinase (255 aa).

Residues glycine 40 to glycine 41, arginine 62, and asparagine 153 each bind substrate.

It belongs to the acetylglutamate kinase family. ArgB subfamily.

It is found in the cytoplasm. The catalysed reaction is N-acetyl-L-glutamate + ATP = N-acetyl-L-glutamyl 5-phosphate + ADP. Its pathway is amino-acid biosynthesis; L-arginine biosynthesis; N(2)-acetyl-L-ornithine from L-glutamate: step 2/4. In terms of biological role, catalyzes the ATP-dependent phosphorylation of N-acetyl-L-glutamate. This Bacillus mycoides (strain KBAB4) (Bacillus weihenstephanensis) protein is Acetylglutamate kinase.